We begin with the raw amino-acid sequence, 216 residues long: Cytidylate kinase (216 aa).

Residue glycine 10–threonine 18 participates in ATP binding.

The protein belongs to the cytidylate kinase family. Type 1 subfamily.

It localises to the cytoplasm. The enzyme catalyses CMP + ATP = CDP + ADP. The catalysed reaction is dCMP + ATP = dCDP + ADP. This is Cytidylate kinase from Clostridioides difficile (strain 630) (Peptoclostridium difficile).